The following is a 741-amino-acid chain: 1,4-alpha-glucan branching enzyme GlgB (741 aa).

The active-site Nucleophile is aspartate 420. Glutamate 473 acts as the Proton donor in catalysis.

The protein belongs to the glycosyl hydrolase 13 family. GlgB subfamily. Monomer.

The enzyme catalyses Transfers a segment of a (1-&gt;4)-alpha-D-glucan chain to a primary hydroxy group in a similar glucan chain.. It functions in the pathway glycan biosynthesis; glycogen biosynthesis. In terms of biological role, catalyzes the formation of the alpha-1,6-glucosidic linkages in glycogen by scission of a 1,4-alpha-linked oligosaccharide from growing alpha-1,4-glucan chains and the subsequent attachment of the oligosaccharide to the alpha-1,6 position. This chain is 1,4-alpha-glucan branching enzyme GlgB, found in Pseudomonas syringae pv. syringae (strain B728a).